Consider the following 361-residue polypeptide: D-alanine--D-alanine ligase (361 aa).

One can recognise an ATP-grasp domain in the interval 134–344 (KILAQRAGVP…YTDLITKLID (211 aa)). 169 to 224 (ASQLGSDLFVKPSNQGSSVGVSHVTNEKEYKVALAEAFKYDDKVLVEETVHGTEVE) contacts ATP. Aspartate 297, glutamate 311, and asparagine 313 together coordinate Mg(2+).

It belongs to the D-alanine--D-alanine ligase family. Requires Mg(2+) as cofactor. It depends on Mn(2+) as a cofactor.

It is found in the cytoplasm. It catalyses the reaction 2 D-alanine + ATP = D-alanyl-D-alanine + ADP + phosphate + H(+). Its pathway is cell wall biogenesis; peptidoglycan biosynthesis. Its function is as follows. Cell wall formation. In Lactobacillus gasseri (strain ATCC 33323 / DSM 20243 / BCRC 14619 / CIP 102991 / JCM 1131 / KCTC 3163 / NCIMB 11718 / NCTC 13722 / AM63), this protein is D-alanine--D-alanine ligase.